The sequence spans 150 residues: UPF0336 protein SCO4636 (150 aa).

Residues 8–116 (VGRSYPPTAP…STIEAIKSMA (109 aa)) enclose the MaoC-like domain.

Belongs to the UPF0336 family.

The polypeptide is UPF0336 protein SCO4636 (Streptomyces coelicolor (strain ATCC BAA-471 / A3(2) / M145)).